The primary structure comprises 164 residues: Dehydrin Rab16B (164 aa).

Residues 1-164 (MENYQGQHGY…KIKEKLPGQH (164 aa)) are disordered. A compositionally biased stretch (gly residues) spans 25–53 (GQYGGGATAPGGGHGAMGMGGHAGAGAGG). A compositionally biased stretch (low complexity) spans 107–117 (GNNQQQQQMMG). A compositionally biased stretch (basic and acidic residues) spans 147-164 (GEKKGFMDKIKEKLPGQH).

Belongs to the plant dehydrin family.

The polypeptide is Dehydrin Rab16B (RAB16B) (Oryza sativa subsp. indica (Rice)).